A 675-amino-acid polypeptide reads, in one-letter code: DNA ligase (675 aa).

NAD(+) is bound by residues 36–40 (DAAYD), 85–86 (SL), and Glu-117. The active-site N6-AMP-lysine intermediate is the Lys-119. The NAD(+) site is built by Arg-140, Glu-177, Lys-294, and Lys-318. Residues Cys-412, Cys-415, Cys-430, and Cys-436 each contribute to the Zn(2+) site. In terms of domain architecture, BRCT spans 597–675 (AEDLPLSGNT…EAEFLELIGE (79 aa)).

Belongs to the NAD-dependent DNA ligase family. LigA subfamily. Requires Mg(2+) as cofactor. Mn(2+) serves as cofactor.

The catalysed reaction is NAD(+) + (deoxyribonucleotide)n-3'-hydroxyl + 5'-phospho-(deoxyribonucleotide)m = (deoxyribonucleotide)n+m + AMP + beta-nicotinamide D-nucleotide.. In terms of biological role, DNA ligase that catalyzes the formation of phosphodiester linkages between 5'-phosphoryl and 3'-hydroxyl groups in double-stranded DNA using NAD as a coenzyme and as the energy source for the reaction. It is essential for DNA replication and repair of damaged DNA. This Thioalkalivibrio sulfidiphilus (strain HL-EbGR7) protein is DNA ligase.